The following is a 508-amino-acid chain: 4-trimethylaminobutyraldehyde dehydrogenase A (508 aa).

Residues K194 and 246–250 each bind NAD(+); that span reads GSVPT. E268 acts as the Proton acceptor in catalysis. C302 (nucleophile) is an active-site residue. E405 is an NAD(+) binding site.

The protein belongs to the aldehyde dehydrogenase family. In terms of assembly, homotetramer.

The protein resides in the cytoplasm. The protein localises to the cytosol. The enzyme catalyses 4-(trimethylamino)butanal + NAD(+) + H2O = 4-(trimethylamino)butanoate + NADH + 2 H(+). It carries out the reaction an aldehyde + NAD(+) + H2O = a carboxylate + NADH + 2 H(+). It functions in the pathway amine and polyamine biosynthesis; carnitine biosynthesis. In terms of biological role, converts gamma-trimethylaminobutyraldehyde into gamma-butyrobetaine with high efficiency (in vitro). Can catalyze the irreversible oxidation of a broad range of aldehydes to the corresponding acids in an NAD-dependent reaction, but with low efficiency. The protein is 4-trimethylaminobutyraldehyde dehydrogenase A (aldh9a1a) of Danio rerio (Zebrafish).